The sequence spans 444 residues: ATP-dependent protease ATPase subunit HslU (444 aa).

Residues Ile-18, 60–65, Asp-256, Glu-322, and Arg-394 each bind ATP; that span reads GVGKTE.

The protein belongs to the ClpX chaperone family. HslU subfamily. A double ring-shaped homohexamer of HslV is capped on each side by a ring-shaped HslU homohexamer. The assembly of the HslU/HslV complex is dependent on binding of ATP.

It localises to the cytoplasm. ATPase subunit of a proteasome-like degradation complex; this subunit has chaperone activity. The binding of ATP and its subsequent hydrolysis by HslU are essential for unfolding of protein substrates subsequently hydrolyzed by HslV. HslU recognizes the N-terminal part of its protein substrates and unfolds these before they are guided to HslV for hydrolysis. In Buchnera aphidicola subsp. Cinara cedri (strain Cc), this protein is ATP-dependent protease ATPase subunit HslU.